A 345-amino-acid polypeptide reads, in one-letter code: WD40 repeat protein poxJ (345 aa).

WD repeat units lie at residues 15–49 (ANPPSDSISELSWSPVANHLAMSSWDQTVRIYDVS), 59–100 (LFNF…EAQQ), 101–146 (VAAH…PLAT), and 250–284 (VNDVSFHPKYYTFSTAGADGTFAFWDKDAHHRLKS).

The protein belongs to the WD repeat rae1 family.

It participates in secondary metabolite biosynthesis. In terms of biological role, WD40 repeat protein; part of the gene cluster that mediates the biosynthesis of oxaleimides, cytotoxic compounds containing an unusual disubstituted succinimide moiety. The first step of the pathway is provided by the HR-PKS poxF that serves in a new mode of collaborative biosynthesis with the PKS-NRPS poxE, by providing the olefin containing amino acid substrate via the synthesis of an ACP-bound dec-4-enoate. The cytochrome P450 monooxygenase poxM-catalyzed oxidation at the alpha-position creates the enzyme-bound 2-hydroxydec-4-enoyl-ACP thioester, which may be prone to spontaneous hydrolysis to yield 2-hydroxydec-4-enoic acid due to increased electrophilicity of the carbonyl. 2-hydroxydec-4-enoic acid can then be further oxidized by poxM to yield the alpha-ketoacid 2-oxodec-4-enoicacid, which is reductively aminated by the aminotransferase poxL to yield (S,E)-2-aminodec-4-enoic acid. The Hybrid PKS-NRPS synthetase poxE then performs condensation between the octaketide product of its PKS modules and the amino group of (S,E)-2-aminodec-4-enoic acid which is activated and incorporated by the adenylation domain. The resulting aminoacyl product can be cyclized by the Diels-Alderase PoxQ and reductively released by the reductive (R) domain of poxE to yield an aldehyde intermediate. The released aldehyde is then substrate for a Knoevenagel condensation by the hydrolyase poxO followed by an oxidation at the 5-position of the pyrrolidone ring. The presence of the olefin from the amino acid building block allows for migration of the substituted allyl group to occur. This allylic transposition reaction takes place in a conjugate addition, semipinacol-like fashion to yield a succinimide intermediate. Iterative two-electron oxidations of the C7 methyl of the succinimide intermediate to the carboxylic acid can be catalyzed by one of two remaining cytochrome P450 monooxygenasess poxC or poxD to yield oxaleimide A. Subsequent oxidation yields the maleimide scaffold oxaleimide I. Both oxaleimide A and oxaleimide I can undergo oxidative modifications in the decalin ring to yield the series of products oxaleimides B to H. The sequence is that of WD40 repeat protein poxJ from Penicillium oxalicum (strain 114-2 / CGMCC 5302) (Penicillium decumbens).